A 930-amino-acid polypeptide reads, in one-letter code: MKLKDTLNLGKTEFPMRAGLPTKEPVWQKEWEDAKLYQRRQELNQGKPHFTLHDGPPYANGNIHVGHAMNKISKDIIVRSKSMSGFYAPFIPGWDTHGLPIEQVLSKQGVKRKEMDLVEYLKLCREYALSQVDKQREDFKRLGVSGDWENPYVTLTPDYEAAQIRVFGEMANKGYIYRGAKPVYWSWSSESALAEAEIEYHDLVSTSLYYANKVKDGKGVLDTDTYIVVWTTTPFTITASRGLTVGADIDYVLVQPAGEARKFVVAAELLTSLSEKFGWADVQVLETYRGQELNHIVTEHPWDTAVEELVILGDHVTTDSGTGIVHTAPGFGEDDYNVGIANNLEVAVTVDERGIMMKNAGPEFEGQFYEKVVPTVIEKLGNLLLAQEEISHSYPFDWRTKKPIIWRAVPQWFASVSKFRQEILDEIEKVKFHSEWGKVRLYNMIRDRGDWVISRQRAWGVPLPIFYAEDGTAIMVAETIEHVAQLFEEHGSSIWWERDAKDLLPEEFTHPGSPNGEFKKETDIMDVWFDSGSSWNGVVVNRPELTYPADLYLEGSDQYRGWFNSSLITSVANHGVAPYKQILSQGFALDGKGEKMSKSLGNTIAPSDVEKQFGAEILRLWVTSVDSSNDVRISMDILSQVSETYRKIRNTLRFLIANTSDFNPAQDTVAYDELRSVDKYMTIRFNQLVKTIRDAYADFEFLTIYKALVNFINVDLSAFYLDFAKDVVYIEGAKSLERRQMQTVFYDILVKITKLLTPILPHTAEEIWSYLEFEAEDFVQLSELPEAQTSANQEEILDTWAAFMDFRGQAQKALEEARNAKVIGKSLEAHLTVYPNEVVKTLLEAVNSNVAQLLIVSDLTIAEGPAPEAALSFEDVAFTVERAAGEVCDRCRRIDPTTAERSYQAVICDHCASIVEENFAEAVAEGFEEK.

The 'HIGH' region motif lies at 57-67; the sequence is PYANGNIHVGH. E554 is an L-isoleucyl-5'-AMP binding site. The 'KMSKS' region motif lies at 595-599; the sequence is KMSKS. K598 contributes to the ATP binding site. Residues C888, C891, C908, and C911 each contribute to the Zn(2+) site.

Belongs to the class-I aminoacyl-tRNA synthetase family. IleS type 1 subfamily. Monomer. Zn(2+) serves as cofactor.

It is found in the cytoplasm. The catalysed reaction is tRNA(Ile) + L-isoleucine + ATP = L-isoleucyl-tRNA(Ile) + AMP + diphosphate. In terms of biological role, catalyzes the attachment of isoleucine to tRNA(Ile). As IleRS can inadvertently accommodate and process structurally similar amino acids such as valine, to avoid such errors it has two additional distinct tRNA(Ile)-dependent editing activities. One activity is designated as 'pretransfer' editing and involves the hydrolysis of activated Val-AMP. The other activity is designated 'posttransfer' editing and involves deacylation of mischarged Val-tRNA(Ile). The protein is Isoleucine--tRNA ligase of Streptococcus pneumoniae (strain Hungary19A-6).